Consider the following 500-residue polypeptide: Cytochrome P450 71B37 (500 aa).

A helical membrane pass occupies residues 2-22 (ATIWFLPLLFLSCLLLAALRL). Cys-440 is a binding site for heme.

It belongs to the cytochrome P450 family. The cofactor is heme.

It is found in the membrane. This is Cytochrome P450 71B37 (CYP71B37) from Arabidopsis thaliana (Mouse-ear cress).